The following is a 753-amino-acid chain: MAP/microtubule affinity-regulating kinase 3 (753 aa).

The segment at 1–36 is disordered; it reads MSTRTPLPTVNERDTENHTSHGDGRQEVTSRTSRSG. Residues 11–28 are compositionally biased toward basic and acidic residues; that stretch reads NERDTENHTSHGDGRQEV. S42 is subject to Phosphoserine. Positions 56 to 307 constitute a Protein kinase domain; it reads YRLLKTIGKG…LEQIMKDRWI (252 aa). Residues 62–70 and K85 contribute to the ATP site; that span reads IGKGNFAKV. Catalysis depends on D178, which acts as the Proton acceptor. A Phosphothreonine; by LKB1 modification is found at T211. Positions 326–365 constitute a UBA domain; sequence ISDQKRIDIMVGMGYSQEEIQESLSKMKYDEITATYLLLG. Residues S368, S374, S376, S380, S383, L384, S400, R407, S419, and S469 each carry the phosphoserine modification. The disordered stretch occupies residues 370 to 600; sequence ELDASDSSSS…TPLSQTRSRG (231 aa). A compositionally biased stretch (low complexity) spans 374–385; that stretch reads SDSSSSSNLSLA. Residues 391–400 are compositionally biased toward polar residues; the sequence is SDLNNSTGQS. 2 stretches are compositionally biased toward polar residues: residues 490 to 513 and 521 to 548; these read STVP…CSER and VIQN…SSAA. S540 and S543 each carry phosphoserine. A Phosphothreonine modification is found at T549. T564 is subject to Phosphothreonine; by PKC/PRKCZ. Phosphoserine occurs at positions 583, 598, 601, and 643. Over residues 584–600 the composition is skewed to polar residues; sequence PSLSHEATPLSQTRSRG. The segment at 632-655 is disordered; sequence NGRYEGSSRNVSAEQKDENKEAKP. Basic and acidic residues predominate over residues 645–655; it reads EQKDENKEAKP. The KA1 domain occupies 704-753; that stretch reads DGHAENLVQWEMEVCKLPRLSLNGVRFKRISGTSIAFKNIASKIANELKL.

This sequence belongs to the protein kinase superfamily. CAMK Ser/Thr protein kinase family. SNF1 subfamily. As to quaternary structure, interacts with MAPT/TAU. Interacts with DLG5 (via coiled-coil domain). Interacts with STK3/MST2 and STK4/MST1 in the presence of DLG5. Interacts with YWHAB, YWHAG, YWHAQ and YWHAZ. Interacts with PKP2 (via N-terminus). Interacts with CDC25C. Interacts with KSR1. Phosphorylated at Thr-211 by STK11/LKB1 in complex with STE20-related adapter-alpha (STRADA) pseudo kinase and CAB39. Phosphorylation at Thr-564 by PRKCZ/aPKC inhibits the kinase activity. In terms of tissue distribution, ubiquitous.

Its subcellular location is the cell membrane. The protein localises to the cell projection. It is found in the dendrite. The protein resides in the cytoplasm. It catalyses the reaction L-seryl-[protein] + ATP = O-phospho-L-seryl-[protein] + ADP + H(+). The catalysed reaction is L-threonyl-[protein] + ATP = O-phospho-L-threonyl-[protein] + ADP + H(+). With respect to regulation, activated by phosphorylation on Thr-211. Inhibited by phosphorylation on Thr-564. Serine/threonine-protein kinase. Involved in the specific phosphorylation of microtubule-associated proteins for MAP2 and MAP4. Phosphorylates the microtubule-associated protein MAPT/TAU. Phosphorylates CDC25C on 'Ser-216'. Regulates localization and activity of some histone deacetylases by mediating phosphorylation of HDAC7, promoting subsequent interaction between HDAC7 and 14-3-3 and export from the nucleus. Regulates localization and activity of MITF by mediating its phosphorylation, promoting subsequent interaction between MITF and 14-3-3 and retention in the cytosol. Negatively regulates the Hippo signaling pathway and antagonizes the phosphorylation of LATS1. Cooperates with DLG5 to inhibit the kinase activity of STK3/MST2 toward LATS1. Phosphorylates PKP2 and KSR1. The chain is MAP/microtubule affinity-regulating kinase 3 (MARK3) from Homo sapiens (Human).